Consider the following 243-residue polypeptide: Venom protease (243 aa).

Residues 1–243 (VVGGKPAKLG…DSFILPALKK (243 aa)) form the Peptidase S1 domain. A disulfide bond links C34 and C50. Active-site charge relay system residues include H49 and D97. Cystine bridges form between C165-C178 and C189-C217. S193 acts as the Charge relay system in catalysis.

It belongs to the peptidase S1 family. As to expression, expressed by the venom duct.

The protein localises to the secreted. The protein is Venom protease of Bombus pensylvanicus (American bumblebee).